Consider the following 270-residue polypeptide: Tetraspanin-17 (270 aa).

Topologically, residues 1 to 19 (MPGKHQQFQDPEVGCCGKY) are cytoplasmic. Residues 20-40 (FLFGFNIVFWVLGALFLAIGL) traverse the membrane as a helical segment. The Extracellular segment spans residues 41 to 63 (WAWGEKGVLSNISGLTDLGGLDP). The N-linked (GlcNAc...) asparagine glycan is linked to N51. A helical membrane pass occupies residues 64–84 (VWLFVVIGGIMSVLGFAGCIG). Topologically, residues 85–94 (ALRENTFLLK) are cytoplasmic. The chain crosses the membrane as a helical span at residues 95–115 (FFSVFLGLIFFLELAAGILAF). Residues 116 to 234 (VFKDWIRDQL…GQFEKWLQDN (119 aa)) are Extracellular-facing. 4 disulfide bridges follow: C155–C223, C156–C188, C172–C182, and C189–C202. N171 carries N-linked (GlcNAc...) asparagine glycosylation. The chain crosses the membrane as a helical span at residues 235–255 (LIVVAGVLVAIALLQICGICL). The Cytoplasmic portion of the chain corresponds to 256-270 (AQNLVSDIEAVKANW).

It belongs to the tetraspanin (TM4SF) family. Interacts with ADAM10; the interaction influences ADAM10 substrate specificity, endocytosis and turnover.

The protein resides in the cell membrane. In terms of biological role, part of TspanC8 subgroup, composed of 6 members that interact with the transmembrane metalloprotease ADAM10. This interaction is required for ADAM10 exit from the endoplasmic reticulum and for enzymatic maturation and trafficking to the cell surface as well as substrate specificity. Different TspanC8/ADAM10 complexes have distinct substrates. Seems to regulate VE-cadherin expression in endothelial cells probably through interaction with ADAM10, promoting leukocyte transmigration. This Rattus norvegicus (Rat) protein is Tetraspanin-17 (Tspan17).